Consider the following 425-residue polypeptide: Cyanogenic beta-glucosidase (425 aa).

Positions 1 to 11 (LLSITTTHIHA) are cleaved as a signal peptide. A beta-D-glucoside is bound by residues Gln-44, His-148, and 193–194 (NE). The active-site Proton donor is Glu-194. Residues Cys-213 and Cys-221 are joined by a disulfide bond. The N-linked (GlcNAc...) asparagine glycan is linked to Asn-220. Tyr-337 and Glu-408 together coordinate a beta-D-glucoside. The active-site Nucleophile is the Glu-408. The N-linked (GlcNAc...) asparagine glycan is linked to Asn-412.

The protein belongs to the glycosyl hydrolase 1 family. As to quaternary structure, homodimer. Leaves.

It carries out the reaction Hydrolysis of terminal, non-reducing beta-D-glucosyl residues with release of beta-D-glucose.. Its function is as follows. Hydrolyzes cyanoglucosides, contributing to the release of hydrocyanic acid, which functions as a defense mechanism against small predators, when the leaf tissue is damaged. In Trifolium repens (Creeping white clover), this protein is Cyanogenic beta-glucosidase (LI).